A 313-amino-acid chain; its full sequence is Ornithine carbamoyltransferase (313 aa).

Residues 57-60 (STRT), arginine 108, and 135-138 (HPTQ) contribute to the carbamoyl phosphate site. L-ornithine-binding positions include asparagine 167, aspartate 231, and 235 to 236 (SM). Carbamoyl phosphate-binding positions include 272–273 (CL) and arginine 300.

It belongs to the aspartate/ornithine carbamoyltransferase superfamily. OTCase family.

The protein resides in the cytoplasm. The catalysed reaction is carbamoyl phosphate + L-ornithine = L-citrulline + phosphate + H(+). It participates in amino-acid biosynthesis; L-arginine biosynthesis; L-arginine from L-ornithine and carbamoyl phosphate: step 1/3. In terms of biological role, reversibly catalyzes the transfer of the carbamoyl group from carbamoyl phosphate (CP) to the N(epsilon) atom of ornithine (ORN) to produce L-citrulline. This chain is Ornithine carbamoyltransferase, found in Thermotoga maritima (strain ATCC 43589 / DSM 3109 / JCM 10099 / NBRC 100826 / MSB8).